The sequence spans 364 residues: MTKAPQDTRVIVGMSGGVDSSVAAARLIDAGYQVEGLFMKNWNEDDGTDYCTAREDLLDAMQVAGVLGIELHTANFAEQYWDRVFAHFLAEYKAGRTPNPDILCNKEIKFQAFLDHAITLGADYIATGHYSQVSHTGKAKLLRAVDTNKDQTYFLHAVDYQKFDRTLFPLGDLEKPEVRRIAEQKGFDNHKKKDSTGICFIGERRFKDFLEQYLPAQPGSIEDDHGNVIGQHDGLMYYTLGQRQGLGIGGLASASEAPWYVAKKDLERNVLIAVQGTDHPLLYSRVLNSAPMQWVALEAPALPARLTAKTRYRQPDQGCTVSDAGEGRVTVTFDEPQRAVTPGQSVVFYDGPVCLGGAVIEETA.

ATP contacts are provided by residues 13–20 and M39; that span reads GMSGGVDS. The tract at residues 99–101 is interaction with target base in tRNA; that stretch reads NPD. The active-site Nucleophile is the C104. C104 and C199 are disulfide-bonded. G128 provides a ligand contact to ATP. Residues 149–151 are interaction with tRNA; sequence KDQ. The active-site Cysteine persulfide intermediate is C199. The segment at 311-312 is interaction with tRNA; the sequence is RY.

The protein belongs to the MnmA/TRMU family.

The protein resides in the cytoplasm. It catalyses the reaction S-sulfanyl-L-cysteinyl-[protein] + uridine(34) in tRNA + AH2 + ATP = 2-thiouridine(34) in tRNA + L-cysteinyl-[protein] + A + AMP + diphosphate + H(+). In terms of biological role, catalyzes the 2-thiolation of uridine at the wobble position (U34) of tRNA, leading to the formation of s(2)U34. This is tRNA-specific 2-thiouridylase MnmA from Alcanivorax borkumensis (strain ATCC 700651 / DSM 11573 / NCIMB 13689 / SK2).